The sequence spans 145 residues: MPTRFKKTRHQRGSTFCGYGRVGKHRKHPSGRGNAGGEHHHRINFRKYHPGYFGKCGMNHYHKKKNTTWKPTINLDNLTKLMAKDEAMKAKKGEVLPVIDLLANGYSKLLGNGHLQAPCIVKARWVSKLADKKIRKAGGAVVLQA.

Positions glycine 20–histidine 39 are disordered.

The protein belongs to the universal ribosomal protein uL15 family.

The polypeptide is Large ribosomal subunit protein uL15 (RPL27A) (Trypanosoma brucei brucei).